Consider the following 220-residue polypeptide: Probable septum site-determining protein MinC (220 aa).

It belongs to the MinC family. As to quaternary structure, interacts with MinD and FtsZ.

Functionally, cell division inhibitor that blocks the formation of polar Z ring septums. Rapidly oscillates between the poles of the cell to destabilize FtsZ filaments that have formed before they mature into polar Z rings. Prevents FtsZ polymerization. This Prochlorococcus marinus subsp. pastoris (strain CCMP1986 / NIES-2087 / MED4) protein is Probable septum site-determining protein MinC.